Reading from the N-terminus, the 185-residue chain is Translation initiation factor IF-3 (185 aa).

It belongs to the IF-3 family. In terms of assembly, monomer.

It is found in the cytoplasm. Its function is as follows. IF-3 binds to the 30S ribosomal subunit and shifts the equilibrium between 70S ribosomes and their 50S and 30S subunits in favor of the free subunits, thus enhancing the availability of 30S subunits on which protein synthesis initiation begins. This chain is Translation initiation factor IF-3, found in Bacteroides thetaiotaomicron (strain ATCC 29148 / DSM 2079 / JCM 5827 / CCUG 10774 / NCTC 10582 / VPI-5482 / E50).